The chain runs to 246 residues: Ribonuclease 3 (246 aa).

One can recognise an RNase III domain in the interval 20-145 (FSKLEKILGF…FVGAIYLDRG (126 aa)). Position 62 (Glu62) interacts with Mg(2+). Residue Asp66 is part of the active site. Asn131 and Glu134 together coordinate Mg(2+). Glu134 is a catalytic residue. A DRBM domain is found at 173–241 (SYKSLLIEWC…SKRGYFVFQS (69 aa)).

The protein belongs to the ribonuclease III family. As to quaternary structure, homodimer. The cofactor is Mg(2+).

It localises to the cytoplasm. The enzyme catalyses Endonucleolytic cleavage to 5'-phosphomonoester.. Its function is as follows. Digests double-stranded RNA. Involved in the processing of primary rRNA transcript to yield the immediate precursors to the large and small rRNAs (23S and 16S). Processes some mRNAs, and tRNAs when they are encoded in the rRNA operon. Processes pre-crRNA and tracrRNA of type II CRISPR loci if present in the organism. The protein is Ribonuclease 3 of Flavobacterium psychrophilum (strain ATCC 49511 / DSM 21280 / CIP 103535 / JIP02/86).